The following is a 312-amino-acid chain: DNA-directed RNA polymerase subunit alpha (312 aa).

The segment at 1-229 (MLQYQIDRIE…ELFQPLATVT (229 aa)) is alpha N-terminal domain (alpha-NTD). The tract at residues 246 to 312 (IPLEELNLSV…ISIPQSRTSA (67 aa)) is alpha C-terminal domain (alpha-CTD).

Belongs to the RNA polymerase alpha chain family. In terms of assembly, in cyanobacteria the RNAP catalytic core is composed of 2 alpha, 1 beta, 1 beta', 1 gamma and 1 omega subunit. When a sigma factor is associated with the core the holoenzyme is formed, which can initiate transcription.

The enzyme catalyses RNA(n) + a ribonucleoside 5'-triphosphate = RNA(n+1) + diphosphate. DNA-dependent RNA polymerase catalyzes the transcription of DNA into RNA using the four ribonucleoside triphosphates as substrates. The sequence is that of DNA-directed RNA polymerase subunit alpha from Prochlorococcus marinus (strain SARG / CCMP1375 / SS120).